The following is a 499-amino-acid chain: MMKKFLLVLIPVLILYFYNLGYNAVWMPNESFYADSAKNMLKSGEFLTPVYNGEIRLNKPPMTYWIVSLGYKIFGVNELGLRFFHALLGVFTGVLTYLLARRITGSKNTALLSFLILSLSFIFIANARYASPEVPFTFFITLSLYLWYEYFTRKKEFLFWLALIASSLAVLTKGPAGFVLPAGVVFFYLLLRAPKELLKIKYYAGTLMVFLLSGWWFLYQYLVHREEFLEVFIKENVKRIYALQRDPFYFYALDINVSFLPYSFLFFFALFWALKEKRRELSFPLVWFSFIFLIFSIVKMKIPVYIMPAYPAMAIITADFLNSQSLKKVKNLSLIFLWTVLVLATLALSLYFKFSATLFPLIPLLLLPFFLKKYELLPAFGAFAFLFYLSSVILPYVEQFRPYREVGKEIRKLDPKNELRTYELGFFHHNLPFYADRVIIRRTKEVKKPAIVLARKGSFDCEPVRKWELYTSSESRFFKFMLDIKRKKRFEEFLLCVIK.

A run of 11 helical transmembrane segments spans residues 5–25 (FLLVLIPVLILYFYNLGYNAV), 79–99 (LGLRFFHALLGVFTGVLTYLL), 110–130 (ALLSFLILSLSFIFIANARYA), 132–152 (PEVPFTFFITLSLYLWYEYFT), 170–190 (VLTKGPAGFVLPAGVVFFYLL), 203–223 (YAGTLMVFLLSGWWFLYQYLV), 252–272 (ALDINVSFLPYSFLFFFALFW), 286–306 (VWFSFIFLIFSIVKMKIPVYI), 332–352 (LSLIFLWTVLVLATLALSLYF), 354–374 (FSATLFPLIPLLLLPFFLKKY), and 377–397 (LPAFGAFAFLFYLSSVILPYV).

It belongs to the glycosyltransferase 39 family.

The protein resides in the cell membrane. This is an uncharacterized protein from Aquifex aeolicus (strain VF5).